A 957-amino-acid polypeptide reads, in one-letter code: Vacuolar membrane protease (957 aa).

The Cytoplasmic segment spans residues methionine 1–threonine 10. A helical membrane pass occupies residues proline 11–valine 31. The Vacuolar segment spans residues threonine 32–threonine 369. Residues asparagine 48, asparagine 105, and asparagine 136 are each glycosylated (N-linked (GlcNAc...) asparagine). The Zn(2+) site is built by histidine 152 and aspartate 164. The active-site Proton acceptor is the glutamate 198. Zn(2+) contacts are provided by glutamate 199, glutamate 224, and histidine 297. A helical membrane pass occupies residues leucine 370 to phenylalanine 390. Residues glycine 391–glycine 423 lie on the Cytoplasmic side of the membrane. A helical membrane pass occupies residues phenylalanine 424 to leucine 444. Residues leucine 445–alanine 450 are Vacuolar-facing. Residues phenylalanine 451 to valine 471 traverse the membrane as a helical segment. Residues alanine 472–methionine 490 are Cytoplasmic-facing. Residues tyrosine 491–valine 511 traverse the membrane as a helical segment. Residues asparagine 512–proline 521 are Vacuolar-facing. A helical membrane pass occupies residues alanine 522–phenylalanine 542. Topologically, residues alanine 543 to lysine 642 are cytoplasmic. 2 disordered regions span residues arginine 560–glutamate 591 and phenylalanine 603–aspartate 628. Residues glutamate 564–alanine 577 are compositionally biased toward polar residues. The chain crosses the membrane as a helical span at residues leucine 643–valine 663. Residues glycine 664 to leucine 685 lie on the Vacuolar side of the membrane. The helical transmembrane segment at phenylalanine 686 to isoleucine 706 threads the bilayer. Topologically, residues histidine 707–valine 713 are cytoplasmic. Residues proline 714–phenylalanine 734 form a helical membrane-spanning segment. The Vacuolar segment spans residues serine 735–isoleucine 957. 3 N-linked (GlcNAc...) asparagine glycosylation sites follow: asparagine 782, asparagine 818, and asparagine 834.

Belongs to the peptidase M28 family. It depends on Zn(2+) as a cofactor.

It is found in the vacuole membrane. Its function is as follows. May be involved in vacuolar sorting and osmoregulation. The chain is Vacuolar membrane protease from Pyrenophora tritici-repentis (strain Pt-1C-BFP) (Wheat tan spot fungus).